The following is a 459-amino-acid chain: Sperm microtubule associated protein 2-like (459 aa).

The segment at 1–138 (MEEGDFSGSS…QEDGKDDLFP (138 aa)) is disordered. The span at 21-30 (TTTTTETRTT) shows a compositional bias: low complexity. Residues 47–63 (NGDEAEAVGEEGQEEDY) are compositionally biased toward acidic residues. The segment covering 64 to 73 (EGSKTHKSHE) has biased composition (basic and acidic residues). Positions 77 to 87 (SFRSHNSSDPP) are enriched in polar residues. 2 stretches are compositionally biased toward basic and acidic residues: residues 91 to 112 (KASD…KTSD) and 127 to 136 (ERQEDGKDDL). 8 THEG repeats span residues 172–190 (KKCF…PKKQ), 212–231 (AALK…PRLV), 258–277 (PALV…PNKF), 291–310 (TTRY…AKGT), 327–346 (STLS…PRIK), 367–386 (AALL…SKRV), 403–422 (AATH…PHTR), and 440–459 (SALK…PIVR).

The chain is Sperm microtubule associated protein 2-like from Mus musculus (Mouse).